Reading from the N-terminus, the 207-residue chain is Adenine phosphoribosyltransferase (207 aa).

The disordered stretch occupies residues 1-33 (MRPAKPPQSKERKRSKSLTSADHDNSPQRAETA).

It belongs to the purine/pyrimidine phosphoribosyltransferase family. Homodimer.

It is found in the cytoplasm. It catalyses the reaction AMP + diphosphate = 5-phospho-alpha-D-ribose 1-diphosphate + adenine. It functions in the pathway purine metabolism; AMP biosynthesis via salvage pathway; AMP from adenine: step 1/1. Catalyzes a salvage reaction resulting in the formation of AMP, that is energically less costly than de novo synthesis. The chain is Adenine phosphoribosyltransferase from Corynebacterium jeikeium (strain K411).